Reading from the N-terminus, the 158-residue chain is 6,7-dimethyl-8-ribityllumazine synthase (158 aa).

Residues W28, 59 to 61 (TVE), and 81 to 83 (VVV) each bind 5-amino-6-(D-ribitylamino)uracil. Residue 86-87 (DT) coordinates (2S)-2-hydroxy-3-oxobutyl phosphate. H89 serves as the catalytic Proton donor. F114 provides a ligand contact to 5-amino-6-(D-ribitylamino)uracil. A (2S)-2-hydroxy-3-oxobutyl phosphate-binding site is contributed by R128.

Belongs to the DMRL synthase family.

The catalysed reaction is (2S)-2-hydroxy-3-oxobutyl phosphate + 5-amino-6-(D-ribitylamino)uracil = 6,7-dimethyl-8-(1-D-ribityl)lumazine + phosphate + 2 H2O + H(+). It participates in cofactor biosynthesis; riboflavin biosynthesis; riboflavin from 2-hydroxy-3-oxobutyl phosphate and 5-amino-6-(D-ribitylamino)uracil: step 1/2. Its function is as follows. Catalyzes the formation of 6,7-dimethyl-8-ribityllumazine by condensation of 5-amino-6-(D-ribitylamino)uracil with 3,4-dihydroxy-2-butanone 4-phosphate. This is the penultimate step in the biosynthesis of riboflavin. This chain is 6,7-dimethyl-8-ribityllumazine synthase, found in Micrococcus luteus (strain ATCC 4698 / DSM 20030 / JCM 1464 / CCM 169 / CCUG 5858 / IAM 1056 / NBRC 3333 / NCIMB 9278 / NCTC 2665 / VKM Ac-2230) (Micrococcus lysodeikticus).